A 548-amino-acid chain; its full sequence is Chaperonin GroEL (548 aa).

Residues 30 to 33 (TLGP), Lys-51, 87 to 91 (DGTTT), Gly-415, 478 to 480 (NAA), and Asp-494 contribute to the ATP site.

This sequence belongs to the chaperonin (HSP60) family. In terms of assembly, forms a cylinder of 14 subunits composed of two heptameric rings stacked back-to-back. Interacts with the co-chaperonin GroES.

The protein resides in the cytoplasm. It carries out the reaction ATP + H2O + a folded polypeptide = ADP + phosphate + an unfolded polypeptide.. In terms of biological role, together with its co-chaperonin GroES, plays an essential role in assisting protein folding. The GroEL-GroES system forms a nano-cage that allows encapsulation of the non-native substrate proteins and provides a physical environment optimized to promote and accelerate protein folding. The polypeptide is Chaperonin GroEL (Janthinobacterium sp. (strain Marseille) (Minibacterium massiliensis)).